The chain runs to 476 residues: uncharacterized protein (476 aa).

Belongs to the herpesviridae US22 family.

This is an uncharacterized protein from Homo sapiens (Human).